Here is a 202-residue protein sequence, read N- to C-terminus: Crustacean calcium-binding protein 23 (202 aa).

Ser1 carries the post-translational modification N-acetylserine. 4 consecutive EF-hand domains span residues 33 to 68, 69 to 104, 105 to 140, and 148 to 185; these read SGLL…FGLD, LSDG…EMTE, PRKK…KTHP, and TEDE…LSKA. Ca(2+) contacts are provided by Asp84, Glu93, Asp118, Asp122, and Asp129.

In terms of assembly, monomer or disulfide-linked dimers. In terms of tissue distribution, striated muscle and brain.

Its function is as follows. Possibly acts as a regulatory protein and not as a calcium buffer or transport protein. The chain is Crustacean calcium-binding protein 23 from Faxonius limosus (Spinycheek crayfish).